Here is a 299-residue protein sequence, read N- to C-terminus: Pyridoxal kinase PdxY (299 aa).

A substrate-binding site is contributed by Ser18. Positions 120 and 157 each coordinate ATP. Asp235 contributes to the substrate binding site.

Belongs to the pyridoxine kinase family. PdxY subfamily. As to quaternary structure, homodimer. Mg(2+) is required as a cofactor.

It catalyses the reaction pyridoxal + ATP = pyridoxal 5'-phosphate + ADP + H(+). Its pathway is cofactor metabolism; pyridoxal 5'-phosphate salvage; pyridoxal 5'-phosphate from pyridoxal: step 1/1. Pyridoxal kinase involved in the salvage pathway of pyridoxal 5'-phosphate (PLP). Catalyzes the phosphorylation of pyridoxal to PLP. The polypeptide is Pyridoxal kinase PdxY (Deinococcus geothermalis (strain DSM 11300 / CIP 105573 / AG-3a)).